The following is a 363-amino-acid chain: Disease resistance protein RBA1 (363 aa).

Residues Pro-12 to Leu-175 enclose the TIR domain. Residues Arg-21–Arg-26 and Gly-53 each bind NAD(+). Glu-86 is a catalytic residue.

Homooligomer; homooligomerization is required for activity.

The protein resides in the cytoplasm. It localises to the nucleus. Its subcellular location is the nucleoplasm. The catalysed reaction is NAD(+) + H2O = ADP-D-ribose + nicotinamide + H(+). The enzyme catalyses NADP(+) + H2O = ADP-D-ribose 2'-phosphate + nicotinamide + H(+). In terms of biological role, disease resistance (R) protein that specifically recognizes the HopBA1 type III effector protein from P.syringae, and triggers cell death. Acts as a NAD(+) hydrolase (NADase): in response to pathogen-recognition, catalyzes cleavage of NAD(+) into ADP-D-ribose (ADPR) and nicotinamide; NAD(+) cleavage triggering a defense system that promotes cell death. In addition to ADPR, also generates a cyclization variant of cyclic ADPR (cADPR), termed v-cADPR, for which the cyclizing bond is unknown. Also able to hydrolyze NADP(+), but not other NAD(+)-related molecules. The polypeptide is Disease resistance protein RBA1 (Arabidopsis thaliana (Mouse-ear cress)).